A 443-amino-acid chain; its full sequence is KH domain-containing, RNA-binding, signal transduction-associated protein 1 (443 aa).

The interval methionine 1–alanine 94 is disordered. Phosphoserine is present on residues serine 18 and serine 20. Lysine 21 bears the N6-acetyllysine mark. The residue at position 29 (serine 29) is a Phosphoserine. A Phosphothreonine modification is found at threonine 33. Asymmetric dimethylarginine; by PRMT1 occurs at positions 45 and 52. Serine 58 bears the Phosphoserine; by MAPK1 mark. Residues threonine 61–proline 72 are compositionally biased toward pro residues. Residues threonine 71 and threonine 84 each carry the phosphothreonine; by MAPK1 modification. Low complexity predominate over residues serine 81–alanine 94. Residues lysine 96 and lysine 102 each participate in a glycyl lysine isopeptide (Lys-Gly) (interchain with G-Cter in SUMO2) cross-link. The interval glutamate 100–methionine 260 is involved in homodimerization. Serine 113 carries the phosphoserine modification. Lysine 139 is covalently cross-linked (Glycyl lysine isopeptide (Lys-Gly) (interchain with G-Cter in SUMO2)). A Phosphoserine modification is found at serine 150. Residues asparagine 171 to valine 197 enclose the KH domain. Lysine 175 is subject to N6-acetyllysine; alternate. Lysine 175 is covalently cross-linked (Glycyl lysine isopeptide (Lys-Gly) (interchain with G-Cter in SUMO2); alternate). Phosphothreonine is present on threonine 183. Residues proline 280–threonine 317 are disordered. Omega-N-methylarginine occurs at positions 282, 284, and 291. Low complexity predominate over residues glycine 283–alanine 293. Residue arginine 304 is modified to Asymmetric dimethylarginine. Over residues glycine 307 to glycine 316 the composition is skewed to low complexity. 2 positions are modified to omega-N-methylarginine; by PRMT1: arginine 310 and arginine 315. The residue at position 320 (arginine 320) is a Dimethylated arginine; alternate. Arginine 320 is modified (omega-N-methylarginine; by PRMT1; alternate). Position 325 is an omega-N-methylarginine; by PRMT1 (arginine 325). Residues glycine 326–proline 345 form a disordered region. Residues arginine 331 and arginine 340 each carry the dimethylated arginine; alternate modification. Omega-N-methylarginine; by PRMT1; alternate occurs at positions 331 and 340. The residue at position 331 (arginine 331) is an Asymmetric dimethylarginine; alternate. An interaction with HNRNPA1 region spans residues glycine 351 to tyrosine 443. Position 387 is a phosphotyrosine (tyrosine 387). At serine 390 the chain carries Phosphoserine. The interval glycine 400–arginine 420 is interaction with ZBTB7A. The interval tyrosine 411 to tyrosine 443 is disordered. Residue lysine 432 forms a Glycyl lysine isopeptide (Lys-Gly) (interchain with G-Cter in SUMO2) linkage. A compositionally biased stretch (basic and acidic residues) spans alanine 434–tyrosine 443. Tyrosine 435, tyrosine 440, and tyrosine 443 each carry phosphotyrosine; by PTK6.

The protein belongs to the KHDRBS family. In terms of assembly, self-associates to form homooligomers when bound to RNA, oligomerization appears to be limited when binding to proteins. Forms a trimeric complex in the nucleus consisting of BANP, HDAC6 and KHDRBS1/SAM68; HDAC6 keeps KHDRBS1 in a deacetylated state which inhibits the inclusion of CD44 alternate exons. The complex is disrupted by MAPK1/MAPK3-mediated phosphorylation of BANP which results in BANP export to the cytoplasm. This facilitates acetylation of KHDRBS1 and CD44 variant exon inclusion. Interacts with KHDRBS3/SLIM-2 and KHDRBS2/SLIM-1; heterooligomer formation of KHDRBS family proteins may modulate RNA substrate specificity. Interacts with RASA1, FYN, GRB2, PLCG1, SRC, CBP and PRMT1. Interacts with PTK6 (via SH3 and SH2 domains). Forms a complex with ILF2, ILF3, YLPM1, RBMX, NCOA5 and PPP1CA. Binds WBP4/FBP21 (via WW domains), FNBP4/FBP30 (via WW domains). Interacts (via Arg/Gly-rich-flanked Pro-rich regions) with FYN (via the SH3 domain). Interacts with APC, HNRNPA1. Interacts with the non-receptor tyrosine kinase SRMS; the interaction leads to phosphorylation of KHDRBS1. Interacts with ZBTB7A; negatively regulates KHDRBS1 splicing activity toward BCL2L1. Tyrosine phosphorylated by several non-receptor tyrosine kinases including LCK, FYN and JAK3. Also tyrosine phosphorylated by the non-receptor tyrosine kinase SRMS in an EGF-dependent manner. Phosphorylation by PTK6 negatively regulates its RNA binding ability. Phosphorylation by PTK6 at Tyr-440 dictates the nuclear localization of KHDRBS1. Phosphorylation by MAPK1 at Ser-58, Thr-71 and Thr-84 regulates CD44 alternative splicing by promoting CD44 exon v5 inclusion. Post-translationally, acetylated. Positively correlates with ability to bind RNA. Deacetylated by HDAC6; this regulates alternative splicing by inhibiting the inclusion of CD44 alternate exons. In terms of processing, arginine methylation is required for nuclear localization. Inhibits interaction with Src-like SH3 domains, but not interaction with WW domains of WBP4/FBP21 and FNBP4/FBP30. In terms of tissue distribution, in adult cerebellum expressed in most neuronal cell populations, specifically in cerebellar granule cells of the internal granular layer, ROR(alpha)-positive Purkinje cells, internal granular layer and molecular layer interneurons (at protein level).

The protein localises to the nucleus. Its subcellular location is the cytoplasm. The protein resides in the membrane. Recruited and tyrosine phosphorylated by several receptor systems, for example the T-cell, leptin and insulin receptors. Once phosphorylated, functions as an adapter protein in signal transduction cascades by binding to SH2 and SH3 domain-containing proteins. Role in G2-M progression in the cell cycle. Represses CBP-dependent transcriptional activation apparently by competing with other nuclear factors for binding to CBP. Also acts as a putative regulator of mRNA stability and/or translation rates and mediates mRNA nuclear export. Positively regulates the association of constitutive transport element (CTE)-containing mRNA with large polyribosomes and translation initiation. May not be involved in the nucleocytoplasmic export of unspliced (CTE)-containing RNA species. RNA-binding protein that plays a role in the regulation of alternative splicing and influences mRNA splice site selection and exon inclusion. Binds to RNA containing 5'-[AU]UAA-3' as a bipartite motif spaced by more than 15 nucleotides. Binds poly(A). In cooperation with HNRNPA1 modulates alternative splicing of BCL2L1 by promoting splicing toward isoform Bcl-X(S), and of SMN1. Can regulate CD44 alternative splicing in a Ras pathway-dependent manner. Can regulate alternative splicing of NRXN1 and NRXN3 in the laminin G-like domain 6 containing the evolutionary conserved neurexin alternative spliced segment 4 (AS4) involved in neurexin selective targeting to postsynaptic partners. In a neuronal activity-dependent manner cooperates synergistically with KHDRBS2/SLIM-1 in regulation of NRXN1 exon skipping at AS4. The cooperation with KHDRBS2/SLIM-1 is antagonistic for regulation of NXRN3 alternative splicing at AS4. This is KH domain-containing, RNA-binding, signal transduction-associated protein 1 from Mus musculus (Mouse).